The primary structure comprises 293 residues: Elongation factor Ts (293 aa).

The segment at 80–83 is involved in Mg(2+) ion dislocation from EF-Tu; it reads TDFV.

Belongs to the EF-Ts family.

Its subcellular location is the cytoplasm. Associates with the EF-Tu.GDP complex and induces the exchange of GDP to GTP. It remains bound to the aminoacyl-tRNA.EF-Tu.GTP complex up to the GTP hydrolysis stage on the ribosome. This Burkholderia cenocepacia (strain HI2424) protein is Elongation factor Ts.